Consider the following 948-residue polypeptide: ELKS/Rab6-interacting/CAST family member 1 (948 aa).

Positions 1–54 (MYGSARSVGKVEPSSQSPGRSPRLPRSPRLGHRRTNSTGGSSGNSVGGGSGKTL) are disordered. N6-acetyllysine is present on Lys-10. A compositionally biased stretch (low complexity) spans 13–28 (PSSQSPGRSPRLPRSP). Phosphoserine is present on residues Ser-17, Ser-21, and Ser-37. Thr-38 is subject to Phosphothreonine. The segment covering 40 to 51 (GSSGNSVGGGSG) has biased composition (gly residues). Phosphoserine is present on residues Ser-55, Ser-75, Ser-94, Ser-796, and Ser-937. Residues 144-920 (RQARDNTIMD…RMKLMADNYE (777 aa)) adopt a coiled-coil conformation. The span at 773-796 (KHKEQVEKKKSAQMLEEARRREDS) shows a compositional bias: basic and acidic residues. Disordered regions lie at residues 773–801 (KHKEQVEKKKSAQMLEEARRREDSLSDSS) and 903–948 (QLKQ…GIWA). A compositionally biased stretch (acidic residues) spans 939–948 (DQDEEEGIWA).

As to quaternary structure, interacts with the GTB-bound forms of RAB6A isoform 1 and isoform 2 and with RAB6B. The interaction was strongest with RAB6B, followed by RAB6A isoform 2 and weakest with RAB6A isoform 1. Part of a complex with CHUK, IKBKB and IKBKG. Interacts with CHUK, IKBKB and IKBKG. The interaction with IKBKG is independent of CHUK and IKBKB. Interacts with NFKBIA. Isoform 1 interacts through its C-terminus with the PDZ domains of RIMS1 and RIMS2. Interacts with ERC2/CAST1. Interacts with SDCCAG8. Part of a cortical microtubule stabilization complex (CMSC) composed of KANK1, PPFIA1, PPFIBP1, ERC1/ELKS, PHLDB2/LL5beta, CLASPs, KIF21A and possibly additional interactors; within CMSCs KANK1 and PHLDB2/LL5beta appear to be the core components for targeting of microtubule-binding proteins KIF21A and CLASPs, whereas PPFIA1, PPFIBP1 and ERC1/ELKS serve as scaffolds for protein clustering. As to expression, isoform 1 is specifically expressed in brain. A further probable isoform is widely expressed outside of brain It is referred to as ERC1a by PubMed:12391317 and characterized by a C-terminus identical to that of isoforms 1 in human and mouse.

The protein resides in the cytoplasm. Its subcellular location is the cytoskeleton. The protein localises to the microtubule organizing center. It localises to the centrosome. It is found in the membrane. The protein resides in the golgi apparatus membrane. Its subcellular location is the presynaptic active zone. The protein localises to the cell projection. It localises to the podosome. Functionally, regulatory subunit of the IKK complex. Probably recruits IkappaBalpha/NFKBIA to the complex. May be involved in the organization of the cytomatrix at the nerve terminals active zone (CAZ) which regulates neurotransmitter release. May be involved in vesicle trafficking at the CAZ. May be involved in Rab-6 regulated endosomes to Golgi transport. This Rattus norvegicus (Rat) protein is ELKS/Rab6-interacting/CAST family member 1 (Erc1).